Consider the following 562-residue polypeptide: 3-(3-hydroxy-phenyl)propionate/3-hydroxycinnamic acid hydroxylase (562 aa).

FAD-binding positions include 8 to 37 and 275 to 285; these read DVVIVGAGPVGLTLANILGGQGVRTLIIEE and FRKGRMLLAGD.

It belongs to the PheA/TfdB FAD monooxygenase family. It depends on FAD as a cofactor.

It catalyses the reaction 3-(3-hydroxyphenyl)propanoate + NADH + O2 + H(+) = 3-(2,3-dihydroxyphenyl)propanoate + NAD(+) + H2O. It carries out the reaction (2E)-3-(3-hydroxyphenyl)prop-2-enoate + NADH + O2 + H(+) = (2E)-3-(2,3-dihydroxyphenyl)prop-2-enoate + NAD(+) + H2O. The protein operates within aromatic compound metabolism; 3-phenylpropanoate degradation. Functionally, catalyzes the insertion of one atom of molecular oxygen into position 2 of the phenyl ring of 3-(3-hydroxyphenyl)propionate (3-HPP) and hydroxycinnamic acid (3HCI). The chain is 3-(3-hydroxy-phenyl)propionate/3-hydroxycinnamic acid hydroxylase from Mycolicibacterium smegmatis (strain ATCC 700084 / mc(2)155) (Mycobacterium smegmatis).